The chain runs to 124 residues: Large ribosomal subunit protein bL17 (124 aa).

This sequence belongs to the bacterial ribosomal protein bL17 family. In terms of assembly, part of the 50S ribosomal subunit. Contacts protein L32.

The chain is Large ribosomal subunit protein bL17 from Borrelia turicatae (strain 91E135).